A 369-amino-acid chain; its full sequence is 4-hydroxy-3-methylbut-2-en-1-yl diphosphate synthase (flavodoxin) (369 aa).

The [4Fe-4S] cluster site is built by cysteine 270, cysteine 273, cysteine 305, and glutamate 312.

It belongs to the IspG family. Requires [4Fe-4S] cluster as cofactor.

The catalysed reaction is (2E)-4-hydroxy-3-methylbut-2-enyl diphosphate + oxidized [flavodoxin] + H2O + 2 H(+) = 2-C-methyl-D-erythritol 2,4-cyclic diphosphate + reduced [flavodoxin]. It participates in isoprenoid biosynthesis; isopentenyl diphosphate biosynthesis via DXP pathway; isopentenyl diphosphate from 1-deoxy-D-xylulose 5-phosphate: step 5/6. In terms of biological role, converts 2C-methyl-D-erythritol 2,4-cyclodiphosphate (ME-2,4cPP) into 1-hydroxy-2-methyl-2-(E)-butenyl 4-diphosphate. This Pseudomonas fluorescens (strain ATCC BAA-477 / NRRL B-23932 / Pf-5) protein is 4-hydroxy-3-methylbut-2-en-1-yl diphosphate synthase (flavodoxin).